The chain runs to 78 residues: Acyl carrier protein (78 aa).

The Carrier domain occupies 4–78; the sequence is AQIKEKVYDI…QQAIDYIVKK (75 aa). Serine 39 carries the O-(pantetheine 4'-phosphoryl)serine modification.

The protein belongs to the acyl carrier protein (ACP) family. 4'-phosphopantetheine is transferred from CoA to a specific serine of apo-ACP by AcpS. This modification is essential for activity because fatty acids are bound in thioester linkage to the sulfhydryl of the prosthetic group.

It localises to the cytoplasm. Its pathway is lipid metabolism; fatty acid biosynthesis. Carrier of the growing fatty acid chain in fatty acid biosynthesis. In Chlorobium phaeobacteroides (strain DSM 266 / SMG 266 / 2430), this protein is Acyl carrier protein.